We begin with the raw amino-acid sequence, 71 residues long: MKENIHPTTFKAKMTCACGYEAEALSTKGEVVNVEICSQCHPFYTGKQRFVDTAGRIDRFRKKYAKFGEGK.

Residues Cys-16, Cys-18, Cys-37, and Cys-40 each coordinate Zn(2+).

This sequence belongs to the bacterial ribosomal protein bL31 family. Type A subfamily. As to quaternary structure, part of the 50S ribosomal subunit. Requires Zn(2+) as cofactor.

Binds the 23S rRNA. The sequence is that of Large ribosomal subunit protein bL31 from Nitratidesulfovibrio vulgaris (strain DSM 19637 / Miyazaki F) (Desulfovibrio vulgaris).